A 119-amino-acid polypeptide reads, in one-letter code: V-type proton ATPase subunit F (119 aa).

This sequence belongs to the V-ATPase F subunit family. V-ATPase is a heteromultimeric enzyme composed of a peripheral catalytic V1 complex (components A to H) attached to an integral membrane V0 proton pore complex (components: a, c, c', c'', d, e, f and VOA1).

It is found in the vacuole membrane. Its function is as follows. Subunit of the V1 complex of vacuolar(H+)-ATPase (V-ATPase), a multisubunit enzyme composed of a peripheral complex (V1) that hydrolyzes ATP and a membrane integral complex (V0) that translocates protons. V-ATPase is responsible for acidifying and maintaining the pH of intracellular compartments. The chain is V-type proton ATPase subunit F (VMA7) from Vanderwaltozyma polyspora (strain ATCC 22028 / DSM 70294 / BCRC 21397 / CBS 2163 / NBRC 10782 / NRRL Y-8283 / UCD 57-17) (Kluyveromyces polysporus).